A 49-amino-acid chain; its full sequence is MRVNITLEHKESGERLYLTQKNKRNTPDKLELKKYSKKLRKHVIFKEVK.

Belongs to the bacterial ribosomal protein bL33 family.

This chain is Large ribosomal subunit protein bL33B (rpmG2), found in Lactococcus lactis subsp. cremoris (Streptococcus cremoris).